Here is a 255-residue protein sequence, read N- to C-terminus: Poxin (255 aa).

The protein belongs to the poxin family. Highly divergent.

It catalyses the reaction 2',3'-cGAMP + H2O = Gp(2'-5')Ap(3') + H(+). Functionally, nuclease that cleaves 2',3'-cGAMP. In Bombyx mori (Silk moth), this protein is Poxin.